The primary structure comprises 306 residues: UDP-3-O-acyl-N-acetylglucosamine deacetylase (306 aa).

Residues His81, His241, and Asp245 each contribute to the Zn(2+) site. The Proton donor role is filled by His268.

Belongs to the LpxC family. Zn(2+) is required as a cofactor.

It carries out the reaction a UDP-3-O-[(3R)-3-hydroxyacyl]-N-acetyl-alpha-D-glucosamine + H2O = a UDP-3-O-[(3R)-3-hydroxyacyl]-alpha-D-glucosamine + acetate. The protein operates within glycolipid biosynthesis; lipid IV(A) biosynthesis; lipid IV(A) from (3R)-3-hydroxytetradecanoyl-[acyl-carrier-protein] and UDP-N-acetyl-alpha-D-glucosamine: step 2/6. Catalyzes the hydrolysis of UDP-3-O-myristoyl-N-acetylglucosamine to form UDP-3-O-myristoylglucosamine and acetate, the committed step in lipid A biosynthesis. This chain is UDP-3-O-acyl-N-acetylglucosamine deacetylase, found in Hydrogenovibrio crunogenus (strain DSM 25203 / XCL-2) (Thiomicrospira crunogena).